The primary structure comprises 41 residues: MKVRNSLKSLRSRHRDNRLVRRKGRIYVINKVQRRFKARQG.

It belongs to the bacterial ribosomal protein bL36 family.

The chain is Large ribosomal subunit protein bL36 from Rhodopseudomonas palustris (strain BisB5).